The primary structure comprises 246 residues: Flagellar brake protein YcgR (246 aa).

The region spanning 128–232 (KRAHFRAYVG…QAERQLLQAI (105 aa)) is the PilZ domain.

This sequence belongs to the YcgR family. As to quaternary structure, monomer. Interacts with the flagellar basal bodies.

It is found in the bacterial flagellum basal body. Its function is as follows. Acts as a flagellar brake, regulating swimming and swarming in a bis-(3'-5') cyclic diguanylic acid (c-di-GMP)-dependent manner. Binds 1 c-di-GMP dimer per subunit. Increasing levels of c-di-GMP lead to decreased motility. The protein is Flagellar brake protein YcgR of Thioalkalivibrio sulfidiphilus (strain HL-EbGR7).